Here is a 227-residue protein sequence, read N- to C-terminus: Enolase-phosphatase E1 (227 aa).

It belongs to the HAD-like hydrolase superfamily. MasA/MtnC family. In terms of assembly, monomer. Mg(2+) serves as cofactor.

It catalyses the reaction 5-methylsulfanyl-2,3-dioxopentyl phosphate + H2O = 1,2-dihydroxy-5-(methylsulfanyl)pent-1-en-3-one + phosphate. Its pathway is amino-acid biosynthesis; L-methionine biosynthesis via salvage pathway; L-methionine from S-methyl-5-thio-alpha-D-ribose 1-phosphate: step 3/6. The protein operates within amino-acid biosynthesis; L-methionine biosynthesis via salvage pathway; L-methionine from S-methyl-5-thio-alpha-D-ribose 1-phosphate: step 4/6. Functionally, bifunctional enzyme that catalyzes the enolization of 2,3-diketo-5-methylthiopentyl-1-phosphate (DK-MTP-1-P) into the intermediate 2-hydroxy-3-keto-5-methylthiopentenyl-1-phosphate (HK-MTPenyl-1-P), which is then dephosphorylated to form the acireductone 1,2-dihydroxy-3-keto-5-methylthiopentene (DHK-MTPene). This Persephonella marina (strain DSM 14350 / EX-H1) protein is Enolase-phosphatase E1.